The sequence spans 447 residues: NADP-specific glutamate dehydrogenase (447 aa).

Positions 92, 113, and 116 each coordinate substrate. The active-site Proton donor is the lysine 128. Residue glycine 167 participates in substrate binding. Threonine 212 and asparagine 243 together coordinate NADP(+). Residue serine 379 coordinates substrate.

The protein belongs to the Glu/Leu/Phe/Val dehydrogenases family. Homohexamer.

It catalyses the reaction L-glutamate + NADP(+) + H2O = 2-oxoglutarate + NH4(+) + NADPH + H(+). In terms of biological role, catalyzes the reversible oxidative deamination of glutamate to alpha-ketoglutarate and ammonia. The protein is NADP-specific glutamate dehydrogenase (gdh) of Corynebacterium efficiens (strain DSM 44549 / YS-314 / AJ 12310 / JCM 11189 / NBRC 100395).